Reading from the N-terminus, the 458-residue chain is MSLRIYNTLSRALEEFSPIEPGHVRMYVCGMTVYDLCHLGHARSMIAFDVVQRWLRASGLAVTYVRNITDIDDKIIKRAVENGETIRSLTDRMIDALHQDADALGIERPTHEPRATAYVPQMLDMIGTLQGKGLAYQAGNGDVNYAVRKFPGYGKLSGKSLDELNAGERVAVQDGKHDPLDFVLWKSAKPEEPADVKWRSPFGEGRPGWHIECSAMGCALLGESFDIHGGGADLQFPHHENEIAQSEGATGKPFARLWMHNGFINVDNEKMSKSLGNFFTIRDVLKEYDAETVRFFVVRSHYRSPLNYSNVHLDDARAALKRLYTALSLVAPAPVEVDWAEGYAARFKAAMDEDFGTPEAVAVLFDLAGEVNRSKSPAAAGLLKALGRHLGLLQADPQDFLKAGAGLDEAAIQAQIAARAAAKAAKNFAEADRIRNDLLAQGIVLKDSATGTTWEAAQ.

Residue cysteine 29 participates in Zn(2+) binding. The 'HIGH' region signature appears at 31–41 (MTVYDLCHLGH). Cysteine 213, histidine 238, and glutamate 242 together coordinate Zn(2+). Residues 270–274 (KMSKS) carry the 'KMSKS' region motif. Position 273 (lysine 273) interacts with ATP.

It belongs to the class-I aminoacyl-tRNA synthetase family. As to quaternary structure, monomer. Zn(2+) serves as cofactor.

It localises to the cytoplasm. It carries out the reaction tRNA(Cys) + L-cysteine + ATP = L-cysteinyl-tRNA(Cys) + AMP + diphosphate. The sequence is that of Cysteine--tRNA ligase from Acidovorax ebreus (strain TPSY) (Diaphorobacter sp. (strain TPSY)).